We begin with the raw amino-acid sequence, 316 residues long: Ninja-family protein 2 (316 aa).

2 disordered regions span residues 1-29 and 72-236; these read MASR…GEPD and TSDD…TSTG. Positions 99–108 are enriched in basic and acidic residues; that stretch reads ERWRRREMQS. A compositionally biased stretch (polar residues) spans 156-166; it reads DQGNTSSSMPE. Low complexity-rich tracts occupy residues 179-199 and 222-235; these read SSME…QNKS and LRTL…TTST.

Belongs to the Ninja family.

The protein resides in the nucleus. The sequence is that of Ninja-family protein 2 (AFP-B1) from Triticum aestivum (Wheat).